We begin with the raw amino-acid sequence, 251 residues long: Probable phosphatase Sama_2233 (251 aa).

The Zn(2+) site is built by His8, His10, His16, His41, Glu74, His102, His132, Asp193, and His195.

It belongs to the PHP family. It depends on Zn(2+) as a cofactor.

The chain is Probable phosphatase Sama_2233 from Shewanella amazonensis (strain ATCC BAA-1098 / SB2B).